The chain runs to 404 residues: Probable tRNA sulfurtransferase (404 aa).

A THUMP domain is found at 60 to 165 (QPIVEALKLV…DEAAYISYEE (106 aa)). ATP contacts are provided by residues 183–184 (ML), 208–209 (HF), Arg265, Gly287, and Gln296.

This sequence belongs to the ThiI family.

The protein resides in the cytoplasm. It catalyses the reaction [ThiI sulfur-carrier protein]-S-sulfanyl-L-cysteine + a uridine in tRNA + 2 reduced [2Fe-2S]-[ferredoxin] + ATP + H(+) = [ThiI sulfur-carrier protein]-L-cysteine + a 4-thiouridine in tRNA + 2 oxidized [2Fe-2S]-[ferredoxin] + AMP + diphosphate. The enzyme catalyses [ThiS sulfur-carrier protein]-C-terminal Gly-Gly-AMP + S-sulfanyl-L-cysteinyl-[cysteine desulfurase] + AH2 = [ThiS sulfur-carrier protein]-C-terminal-Gly-aminoethanethioate + L-cysteinyl-[cysteine desulfurase] + A + AMP + 2 H(+). It functions in the pathway cofactor biosynthesis; thiamine diphosphate biosynthesis. Functionally, catalyzes the ATP-dependent transfer of a sulfur to tRNA to produce 4-thiouridine in position 8 of tRNAs, which functions as a near-UV photosensor. Also catalyzes the transfer of sulfur to the sulfur carrier protein ThiS, forming ThiS-thiocarboxylate. This is a step in the synthesis of thiazole, in the thiamine biosynthesis pathway. The sulfur is donated as persulfide by IscS. The chain is Probable tRNA sulfurtransferase from Streptococcus pyogenes serotype M2 (strain MGAS10270).